The sequence spans 88 residues: MRLFIALPVLIVVVAMTLEGPAPAQAAPDLSGTLESIPDKLKEFGNTLEDKARAAIEHIKQKEILTKTRAWFSEAFGKVKEKLKTTFS.

The N-terminal stretch at 1–26 (MRLFIALPVLIVVVAMTLEGPAPAQA) is a signal peptide.

The protein belongs to the apolipoprotein C1 family. As to expression, adult and fetal liver.

The protein resides in the secreted. Inhibitor of lipoprotein binding to the low density lipoprotein (LDL) receptor, LDL receptor-related protein, and very low density lipoprotein (VLDL) receptor. Associates with high density lipoproteins (HDL) and the triacylglycerol-rich lipoproteins in the plasma and makes up about 10% of the protein of the VLDL and 2% of that of HDL. Appears to interfere directly with fatty acid uptake and is also the major plasma inhibitor of cholesteryl ester transfer protein (CETP). Modulates the interaction of APOE with beta-migrating VLDL and inhibits binding of beta-VLDL to the LDL receptor-related protein. Binds free fatty acids and reduces their intracellular esterification. The sequence is that of Apolipoprotein C-I (Apoc1) from Mus musculus (Mouse).